We begin with the raw amino-acid sequence, 148 residues long: Large ribosomal subunit protein bL9 (148 aa).

The protein belongs to the bacterial ribosomal protein bL9 family.

Its function is as follows. Binds to the 23S rRNA. The sequence is that of Large ribosomal subunit protein bL9 from Staphylococcus saprophyticus subsp. saprophyticus (strain ATCC 15305 / DSM 20229 / NCIMB 8711 / NCTC 7292 / S-41).